The primary structure comprises 356 residues: Tyrosine recombinase XerS (356 aa).

One can recognise a Core-binding (CB) domain in the interval 16-121 (LMPWYVLEYY…ALSSLYKYLT (106 aa)). Residues 169–354 (GFLTYIDQEH…VNDEQKNALD (186 aa)) enclose the Tyr recombinase domain. Residues R210, K234, H306, R309, and H332 contribute to the active site. Y341 serves as the catalytic O-(3'-phospho-DNA)-tyrosine intermediate.

Belongs to the 'phage' integrase family. XerS subfamily.

The protein resides in the cytoplasm. With respect to regulation, ftsK is required for recombination. In terms of biological role, site-specific tyrosine recombinase, which acts by catalyzing the cutting and rejoining of the recombining DNA molecules. Essential to convert dimers of the bacterial chromosome into monomers to permit their segregation at cell division. The sequence is that of Tyrosine recombinase XerS from Streptococcus pneumoniae (strain P1031).